The chain runs to 232 residues: Large ribosomal subunit protein uL1 (232 aa).

This sequence belongs to the universal ribosomal protein uL1 family. In terms of assembly, part of the 50S ribosomal subunit.

Its function is as follows. Binds directly to 23S rRNA. The L1 stalk is quite mobile in the ribosome, and is involved in E site tRNA release. Functionally, protein L1 is also a translational repressor protein, it controls the translation of the L11 operon by binding to its mRNA. The protein is Large ribosomal subunit protein uL1 of Stenotrophomonas maltophilia (strain K279a).